A 309-amino-acid polypeptide reads, in one-letter code: Taste receptor type 2 member 124 (309 aa).

Topologically, residues 1-7 (MVSVLHS) are extracellular. A helical membrane pass occupies residues 8-28 (ISTIIIIAEFVWGNLSNGLIV). The Cytoplasmic portion of the chain corresponds to 29–46 (LKNCLDWINIKELSTLDQ). A helical membrane pass occupies residues 47–67 (ILILLAISRISLIWETLLMWV). The Extracellular portion of the chain corresponds to 68–81 (KDKLISSITIEELK). A helical membrane pass occupies residues 82-102 (MIMFSFMLSSHFSLWLATALS). At 103–127 (TFYLFRIANCSWQIFLYLKWRLKHL) the chain is on the cytoplasmic side. The chain crosses the membrane as a helical span at residues 128-148 (IVQMLLGSVMFLIANIIQITI). Over 149-182 (TLEKRFYQYKGNTSVNSIQNEFALLIEMMLFNMT) the chain is Extracellular. Residues Asn-160 and Asn-180 are each glycosylated (N-linked (GlcNAc...) asparagine). Residues 183 to 203 (IFSVIPFLLALISFFLLIFSL) form a helical membrane-spanning segment. Residues 204-227 (WKHLQRMQLNSREDRDPSTKAHRN) are Cytoplasmic-facing. A helical transmembrane segment spans residues 228 to 248 (ALGIMVSFLLLYTMYVLSLLI). Residues 249 to 261 (SWIAQKNQSELVH) are Extracellular-facing. Residue Asn-255 is glycosylated (N-linked (GlcNAc...) asparagine). Residues 262–282 (IICMITSLLNPSVHSSILILG) form a helical membrane-spanning segment. Topologically, residues 283-309 (NFKLKQSSLCILRHLGCRLKSQNTPTT) are cytoplasmic.

Belongs to the G-protein coupled receptor T2R family.

Its subcellular location is the membrane. In terms of biological role, putative taste receptor which may play a role in the perception of bitterness. The sequence is that of Taste receptor type 2 member 124 from Rattus norvegicus (Rat).